The primary structure comprises 135 residues: UPF0299 membrane protein YE2790 (135 aa).

A run of 4 helical transmembrane segments spans residues 4–24, 30–50, 63–83, and 93–113; these read VTSL…CLWA, LLLP…FALL, GCHL…VGVM, and FGPI…VVGY.

This sequence belongs to the UPF0299 family.

It is found in the cell inner membrane. This chain is UPF0299 membrane protein YE2790, found in Yersinia enterocolitica serotype O:8 / biotype 1B (strain NCTC 13174 / 8081).